Here is a 128-residue protein sequence, read N- to C-terminus: Putative lipid-binding protein At4g00165 (128 aa).

A signal peptide spans 1 to 23 (MGISKALRSLLILLLLNITFFFG). Cystine bridges form between C34–C90, C46–C76, C56–C75, and C92–C128.

This sequence belongs to the plant LTP family. PEARLI1 subfamily.

It is found in the secreted. In Arabidopsis thaliana (Mouse-ear cress), this protein is Putative lipid-binding protein At4g00165.